The following is a 368-amino-acid chain: MAVAAAETRVFLEVRRRLQSALLILGGPDEGGMHLDISITPTSLLVRTPDGCTEIRLPAGVRLVPSSCGGLQYISGDGLHLRLRVQAESSPQPISVFNQSLQAQECCTFYCQSCGEVTIKDRKLLRVLPLPSENWSALVGEWCCHPDPFANRPLHPRENDCFIGDSFFLVNLKSDLEQEPKANTKVICKRCKVTLGETMSSETTKFYMTEVIIRPSEGSFPNIPRSQFLQSIIAQCLVELSSARSTFRFTIQGQDGKVYILLWVLNSDSLVIEPLRSSSCSRKFPLLESSLEAGSGSAWNAIKVLYQPCIKSRNKELASSWEGDISVHPLTLPSATCLELLLILSRNNASLPLSLRQMNSFQVAFLKM.

A2 carries the N-acetylalanine modification. A BRAT1-like motif motif is present at residues 129-159 (PLPSENWSALVGEWCCHPDPFANRPLHPREN). Zn(2+) is bound at residue C144. The tract at residues 214–236 (RPSEGSFPNIPRSQFLQSIIAQC) is interaction with UBE2C. The segment at 332-368 (LPSATCLELLLILSRNNASLPLSLRQMNSFQVAFLKM) is HECT-like.

As to quaternary structure, interacts with UBE2C/UbcH10 (E2 ubiquitin-conjugating enzyme). In vitro, interacts with cyclin-B. Ubiquitinated by UBCH10 (E2 ubiquitin-conjugating enzyme).

The protein resides in the cytoplasm. The catalysed reaction is S-ubiquitinyl-[E2 ubiquitin-conjugating enzyme]-L-cysteine + [acceptor protein]-L-lysine = [E2 ubiquitin-conjugating enzyme]-L-cysteine + N(6)-ubiquitinyl-[acceptor protein]-L-lysine.. Its pathway is protein modification; protein ubiquitination. Its function is as follows. E3 ubiquitin-protein ligase which accepts ubiquitin from specific E2 ubiquitin-conjugating enzymes, and transfers it to substrates, generally promoting their degradation by the proteasome. Independently of its E3 ubiquitin-protein ligase activity, acts as an inhibitor of CPSF3 endonuclease activity by blocking CPSF3 active site. This is E3 ubiquitin-protein ligase E3D (Ube3d) from Mus musculus (Mouse).